The following is a 112-amino-acid chain: UPF0102 protein JJD26997_0163 (112 aa).

Belongs to the UPF0102 family.

The protein is UPF0102 protein JJD26997_0163 of Campylobacter jejuni subsp. doylei (strain ATCC BAA-1458 / RM4099 / 269.97).